We begin with the raw amino-acid sequence, 110 residues long: MIFMGKTSLGLDENIEGALCYLFGVITGILFYILEKESKFVKFHAVQSIILFGGLWVLSIILAFIPYGWMLSGLVNLAAFILWIVCMYKAYKGEKFKLPVIGDIAEQYSQ.

3 helical membrane passes run 15-35, 49-69, and 70-90; these read IEGA…YILE, IILF…PYGW, and MLSG…MYKA.

This sequence belongs to the UPF0132 family.

The protein localises to the cell membrane. The polypeptide is UPF0132 membrane protein MJ1443 (Methanocaldococcus jannaschii (strain ATCC 43067 / DSM 2661 / JAL-1 / JCM 10045 / NBRC 100440) (Methanococcus jannaschii)).